A 575-amino-acid polypeptide reads, in one-letter code: Interleukin-10 receptor subunit alpha (575 aa).

Positions 1–16 (MLSRLLPFLVTISSLS) are cleaved as a signal peptide. The Extracellular portion of the chain corresponds to 17 to 241 (LEFIAYGTEL…QYFTVTNLSI (225 aa)). N-linked (GlcNAc...) asparagine glycans are attached at residues Asn50, Asn66, Asn113, and Asn182. Cys204 and Cys225 are joined by a disulfide. A glycan (N-linked (GlcNAc...) asparagine) is linked at Asn238. A helical membrane pass occupies residues 242–262 (LVISMLLFCGILVCLVLQWYI). Residues 263 to 575 (RHPGKLPTVL…PLISSLQVEE (313 aa)) lie on the Cytoplasmic side of the membrane. Tyr443 and Tyr493 each carry phosphotyrosine.

Belongs to the type II cytokine receptor family. As to quaternary structure, interacts with IL10. Interacts with IL10RB. Interacts (via its cytoplasmic domain) with JAK1 (via N-terminus). Interacts with BTRC; this interaction leads to IL10RA ubiquitination and subsequent degradation. Interacts with STAT3. Post-translationally, phosphorylated. Phosphorylation of the cytoplasmic tail induced STAT3 activation. In terms of processing, ubiquitinated by BTRC; ubiquitination leads to endocytosis and subsequent degradation of IL10RA.

Its subcellular location is the cell membrane. It localises to the cytoplasm. In terms of biological role, cell surface receptor for the cytokine IL10 that participates in IL10-mediated anti-inflammatory functions, limiting excessive tissue disruption caused by inflammation. Upon binding to IL10, induces a conformational change in IL10RB, allowing IL10RB to bind IL10 as well. In turn, the heterotetrameric assembly complex, composed of two subunits of IL10RA and IL10RB, activates the kinases JAK1 and TYK2 that are constitutively associated with IL10RA and IL10RB respectively. These kinases then phosphorylate specific tyrosine residues in the intracellular domain in IL10RA leading to the recruitment and subsequent phosphorylation of STAT3. Once phosphorylated, STAT3 homodimerizes, translocates to the nucleus and activates the expression of anti-inflammatory genes. In addition, IL10RA-mediated activation of STAT3 inhibits starvation-induced autophagy. This is Interleukin-10 receptor subunit alpha (Il10ra) from Mus musculus (Mouse).